Reading from the N-terminus, the 282-residue chain is ATP phosphoribosyltransferase (282 aa).

Belongs to the ATP phosphoribosyltransferase family. Long subfamily. Mg(2+) is required as a cofactor.

The protein resides in the cytoplasm. It carries out the reaction 1-(5-phospho-beta-D-ribosyl)-ATP + diphosphate = 5-phospho-alpha-D-ribose 1-diphosphate + ATP. The protein operates within amino-acid biosynthesis; L-histidine biosynthesis; L-histidine from 5-phospho-alpha-D-ribose 1-diphosphate: step 1/9. Feedback inhibited by histidine. In terms of biological role, catalyzes the condensation of ATP and 5-phosphoribose 1-diphosphate to form N'-(5'-phosphoribosyl)-ATP (PR-ATP). Has a crucial role in the pathway because the rate of histidine biosynthesis seems to be controlled primarily by regulation of HisG enzymatic activity. The sequence is that of ATP phosphoribosyltransferase from Micrococcus luteus (strain ATCC 4698 / DSM 20030 / JCM 1464 / CCM 169 / CCUG 5858 / IAM 1056 / NBRC 3333 / NCIMB 9278 / NCTC 2665 / VKM Ac-2230) (Micrococcus lysodeikticus).